A 93-amino-acid polypeptide reads, in one-letter code: Acyl carrier protein AcpXL (93 aa).

Positions 2 to 88 constitute a Carrier domain; the sequence is SSTFDKVADI…NLCAKIDELV (87 aa). Position 37 is an O-(pantetheine 4'-phosphoryl)serine (S37).

In terms of processing, 4'-phosphopantetheine is transferred from CoA to a specific serine of apo-ACP by AcpS. This modification is essential for activity because fatty acids are bound in thioester linkage to the sulfhydryl of the prosthetic group.

The protein resides in the cytoplasm. It participates in glycolipid biosynthesis; KDO(2)-lipid A biosynthesis. Functionally, carrier of the growing fatty acid chain in fatty acid biosynthesis. Is involved in the transfer of long hydroxylated fatty acids to lipid A. The polypeptide is Acyl carrier protein AcpXL (acpXL) (Brucella melitensis biotype 1 (strain ATCC 23456 / CCUG 17765 / NCTC 10094 / 16M)).